A 379-amino-acid polypeptide reads, in one-letter code: Homoserine O-acetyltransferase (379 aa).

Residues 45–355 (NAILILHALT…PHGHDAFLIE (311 aa)) form the AB hydrolase-1 domain. Ser151 acts as the Nucleophile in catalysis. Arg220 is a binding site for substrate. Active-site residues include Asp316 and His349. Residue Asp350 coordinates substrate.

It belongs to the AB hydrolase superfamily. MetX family. In terms of assembly, homodimer.

It localises to the cytoplasm. It carries out the reaction L-homoserine + acetyl-CoA = O-acetyl-L-homoserine + CoA. The protein operates within amino-acid biosynthesis; L-methionine biosynthesis via de novo pathway; O-acetyl-L-homoserine from L-homoserine: step 1/1. Its function is as follows. Transfers an acetyl group from acetyl-CoA to L-homoserine, forming acetyl-L-homoserine. In Carboxydothermus hydrogenoformans (strain ATCC BAA-161 / DSM 6008 / Z-2901), this protein is Homoserine O-acetyltransferase.